Consider the following 589-residue polypeptide: Peptide transporter PTR_A (589 aa).

Residues 1–56 (MSETKPAANDLSNVPSASDSDKDNSLDKVHSLEKTGVHEDINKLPSSDLEQLEDDG) are disordered. Residues 19 to 42 (DSDKDNSLDKVHSLEKTGVHEDIN) are compositionally biased toward basic and acidic residues. 4 helical membrane-spanning segments follow: residues 74–95 (IPLSCWLVAIVELAERFSYYGL), 124–144 (ALSYFWQFWCYVTPIFGAWIA), 153–173 (AICIFCGIYLVGILILFITSI), and 180–200 (NTSLGGFIVAIIIIGLGTGGV). Residue asparagine 233 is glycosylated (N-linked (GlcNAc...) asparagine). Helical transmembrane passes span 236-256 (IQNVFMFFYLMINIGSLSVIA), 266-286 (FWAGYLLPLCFFCIAPLVLLL), 345-365 (VYACKVFVFYPIYWLVYGQMI), 388-408 (INAITIIIFIPICERFVYPFI), 420-440 (IFWGFMFASSAMVYAGVLQHF), 467-487 (IAIQTPAYFLIGMSEILASIT), 502-522 (SFIMSLFLVTNAFGSAIGIAL), and 533-553 (WTYTGLAVSCFIAGCLFYIIF).

It belongs to the major facilitator superfamily. Proton-dependent oligopeptide transporter (POT/PTR) (TC 2.A.17) family.

It localises to the cell membrane. It catalyses the reaction a dipeptide(out) + H(+)(out) = a dipeptide(in) + H(+)(in). The enzyme catalyses an L-amino acid tripeptide(out) + H(+)(out) = an L-amino acid tripeptide(in) + H(+)(in). Functionally, peptide transporter that exploits the inwardly directed proton motive force to facilitate the cellular uptake of di/tripeptides. This Candidozyma auris (Yeast) protein is Peptide transporter PTR_A.